Reading from the N-terminus, the 204-residue chain is TPR repeat-containing protein RHE_CH03534.1 (204 aa).

The N-terminal stretch at 1–29 (MSAMRLFALTSAMLPLAFILSTSPFPATA) is a signal peptide. 3 TPR repeats span residues 84 to 117 (INLLMQWADKAIEEKRNPAALDFLDEAIALKPDY), 118 to 151 (AESWNRRATLNFVMGNYRKSMSDIEHVLNIEPRH), and 153 to 185 (GALSGMAAILSNSGNDQLTLKAWERFLDIYPAD).

In Rhizobium etli (strain ATCC 51251 / DSM 11541 / JCM 21823 / NBRC 15573 / CFN 42), this protein is TPR repeat-containing protein RHE_CH03534.1.